We begin with the raw amino-acid sequence, 361 residues long: MRSSMFRCVSRAHYSTSVTEDFINSILARAQEATAKASSNALKLDKMKEGRMQNKRRNGNQNRNSMNNKESRGREGNQGERNMRLKNRSSDSVRANKQQWNKGANTSFVKNPTGNTVVMQPQFKKMQNGKNNLKGDARVEDDLLDVFNSSMEQKPVNFNGTPKSKARFQKKSHILTASKRRKAPQQQLQKVIKRPVSSEYVLEEPTPLSLLEYTPQVFPTKESRLVNFTLDSLKKSNYPIYRSPNLGILKVHDFTLNTPNFGKYTPGSSLIFAKEPQLQNLLIEEDPEDFHRQVTGEYQLLKPYVKKDFEKLTKSKDTVSKLVQNSQVVRLSLQSVVMGSEEKKLVYDVCSGMKPISELQQ.

The N-terminal 14 residues, 1–14 (MRSSMFRCVSRAHY), are a transit peptide targeting the mitochondrion. Residues 37 to 99 (ASSNALKLDK…SDSVRANKQQ (63 aa)) form a disordered region. Residues 43-52 (KLDKMKEGRM) are compositionally biased toward basic and acidic residues. Residues 59 to 68 (GNQNRNSMNN) show a composition bias toward low complexity. Residues 69–91 (KESRGREGNQGERNMRLKNRSSD) are compositionally biased toward basic and acidic residues.

Belongs to the mitochondrion-specific ribosomal protein mS46 family. In terms of assembly, component of the mitochondrial small ribosomal subunit (mt-SSU). Mature yeast 74S mitochondrial ribosomes consist of a small (37S) and a large (54S) subunit. The 37S small subunit contains a 15S ribosomal RNA (15S mt-rRNA) and 34 different proteins. The 54S large subunit contains a 21S rRNA (21S mt-rRNA) and 46 different proteins.

It is found in the mitochondrion. Functionally, component of the mitochondrial ribosome (mitoribosome), a dedicated translation machinery responsible for the synthesis of mitochondrial genome-encoded proteins, including at least some of the essential transmembrane subunits of the mitochondrial respiratory chain. The mitoribosomes are attached to the mitochondrial inner membrane and translation products are cotranslationally integrated into the membrane. This chain is Small ribosomal subunit protein mS46 (RSM28), found in Saccharomyces cerevisiae (strain ATCC 204508 / S288c) (Baker's yeast).